The sequence spans 655 residues: DNA mismatch repair protein MutL (655 aa).

2 disordered regions span residues 357 to 416 (EKKQ…DDYT) and 439 to 460 (DFDSDISNHSDSDIKGSVSKDP). Residues 371–383 (SHEEDEKNDDKAY) are compositionally biased toward basic and acidic residues. Over residues 402–416 (NTSVSTSPNSDDDYT) the composition is skewed to polar residues.

Belongs to the DNA mismatch repair MutL/HexB family.

Its function is as follows. This protein is involved in the repair of mismatches in DNA. It is required for dam-dependent methyl-directed DNA mismatch repair. May act as a 'molecular matchmaker', a protein that promotes the formation of a stable complex between two or more DNA-binding proteins in an ATP-dependent manner without itself being part of a final effector complex. The sequence is that of DNA mismatch repair protein MutL from Staphylococcus saprophyticus subsp. saprophyticus (strain ATCC 15305 / DSM 20229 / NCIMB 8711 / NCTC 7292 / S-41).